Consider the following 103-residue polypeptide: Transcriptional regulator WhiB7 (103 aa).

Positions 17, 49, 52, and 58 each coordinate [4Fe-4S] cluster. The 58-residue stretch at 25-82 (PCHVGDPDLWFAENPGDLERAKALCAGCPIRVQCLTAALERQEPWGVWGGEILDRGSI) folds into the 4Fe-4S Wbl-type domain. The tract at residues 82-103 (IVARKRPRGRPRKDSGGNPAAA) is disordered.

It belongs to the WhiB family. [4Fe-4S] cluster serves as cofactor. The Fe-S cluster can be nitrosylated by nitric oxide (NO). In terms of processing, upon Fe-S cluster removal intramolecular disulfide bonds are formed.

It is found in the cytoplasm. Functionally, acts as a transcriptional regulator. Probably redox-responsive. The apo- but not holo-form probably binds DNA. Participates in maintaining a reduced cytoplasmic (MSH/MSSM) environment under normal growth conditions and directly or indirectly controls the concentration of mycothiol (MSH + MSSM). In Mycolicibacterium smegmatis (strain ATCC 700084 / mc(2)155) (Mycobacterium smegmatis), this protein is Transcriptional regulator WhiB7 (whiB7).